The sequence spans 440 residues: Chromosomal replication initiator protein DnaA (440 aa).

The tract at residues 1–69 (MKERILQEIK…VKVVLGNDAT (69 aa)) is domain I, interacts with DnaA modulators. The domain II stretch occupies residues 69–96 (TFEITYEAFEPHSSYSEPLVKKRAVLLT). The tract at residues 97–313 (PLNPDYTFEN…GAIIKLLVYK (217 aa)) is domain III, AAA+ region. The ADP site is built by valine 108, asparagine 113, glycine 140, leucine 141, glycine 142, lysine 143, threonine 144, histidine 145, and arginine 300. Residue glycine 140 coordinates ATP. Glycine 142, lysine 143, and threonine 144 together coordinate ATP. Threonine 144 lines the Mg(2+) pocket. Positions 314 to 440 (ETTGKEVDLK…GEISRRALSG (127 aa)) are domain IV, binds dsDNA.

It belongs to the DnaA family. As to quaternary structure, oligomerizes as a right-handed, spiral filament on DNA at oriC.

The protein localises to the cytoplasm. Plays an essential role in the initiation and regulation of chromosomal replication. ATP-DnaA binds to the origin of replication (oriC) to initiate formation of the DNA replication initiation complex once per cell cycle. Binds the DnaA box (a 9 base pair repeat at the origin) and separates the double-stranded (ds)DNA. Forms a right-handed helical filament on oriC DNA; dsDNA binds to the exterior of the filament while single-stranded (ss)DNA is stabiized in the filament's interior. The ATP-DnaA-oriC complex binds and stabilizes one strand of the AT-rich DNA unwinding element (DUE), permitting loading of DNA polymerase. After initiation quickly degrades to an ADP-DnaA complex that is not apt for DNA replication. Binds acidic phospholipids. In terms of biological role, the DnaA box consensus is 5'-[ATC][AT]AC[CT]TACCA[CT][CTA]-3' in this bacterium. Mutagenesis of residues that line the central pore blocks dsDNA separation. The sequence is that of Chromosomal replication initiator protein DnaA from Thermotoga maritima (strain ATCC 43589 / DSM 3109 / JCM 10099 / NBRC 100826 / MSB8).